The following is a 564-amino-acid chain: Probable beta-glucosidase btgE (564 aa).

Residues 1–18 (MRGAFLATAAAIAGTAMA) form the signal peptide. A disordered region spans residues 285-304 (ATSSVAPSSSPSKPAAPSGA). N-linked (GlcNAc...) asparagine glycosylation occurs at Asn404. Glu405 serves as the catalytic Proton donor. The Nucleophile role is filled by Glu501.

The protein belongs to the glycosyl hydrolase 17 family.

It is found in the secreted. Its subcellular location is the cell wall. It catalyses the reaction Hydrolysis of terminal, non-reducing beta-D-glucosyl residues with release of beta-D-glucose.. Its pathway is glycan metabolism; cellulose degradation. In terms of biological role, beta-glucosidases are one of a number of cellulolytic enzymes involved in the degradation of cellulosic biomass. Catalyzes the last step releasing glucose from the inhibitory cellobiose. In Aspergillus clavatus (strain ATCC 1007 / CBS 513.65 / DSM 816 / NCTC 3887 / NRRL 1 / QM 1276 / 107), this protein is Probable beta-glucosidase btgE (btgE).